Consider the following 1574-residue polypeptide: Synaptojanin-1 (1574 aa).

The 324-residue stretch at 119–442 (VRKVLNSGNF…GDSISKIYAG (324 aa)) folds into the SAC domain. Residues 500–899 (GSLRVSEQTL…GPPDGTVLVS (400 aa)) are catalytic. A phosphoserine mark is found at S820 and S830. One can recognise an RRM domain in the interval 894–971 (GTVLVSIKSS…RTITITLKSP (78 aa)). A compositionally biased stretch (low complexity) spans 1029 to 1054 (HLQPSSSSGLGTSPSSSPRTSPCQSP). The segment at 1029–1327 (HLQPSSSSGL…GVKQEPTLKS (299 aa)) is disordered. S1053 is subject to Phosphoserine. The span at 1090–1100 (PAAQKESSQTI) shows a compositional bias: polar residues. Residues 1105-1127 (PPPPRPVAPPARPAPPQRPPPPS) show a composition bias toward pro residues. A phosphoserine mark is found at S1147 and S1175. Omega-N-methylarginine is present on R1198. Position 1217 is a phosphothreonine (T1217). Positions 1287–1310 (SRSSQSLPSDSSPQLQQEQPTGQQ) are enriched in low complexity. S1289 and S1350 each carry phosphoserine. Position 1354 is a phosphothreonine (T1354). Disordered regions lie at residues 1382 to 1519 (TMPP…SFDD) and 1532 to 1574 (LPAR…FTER). The span at 1389–1413 (QSKSQESVGSSANPFPSLPTRNPFT) shows a compositional bias: polar residues. A run of 3 repeats spans residues 1401–1403 (NPF), 1410–1412 (NPF), and 1421–1423 (NPF). A 3 X 3 AA repeats of N-P-F region spans residues 1401–1423 (NPFPSLPTRNPFTDRTAAPGNPF). Polar residues-rich tracts occupy residues 1424–1436 (RVQS…TSWL) and 1472–1484 (DLQS…TSNP). Over residues 1535–1548 (RRPPPPPPPVPLLP) the composition is skewed to pro residues. Low complexity predominate over residues 1549–1563 (PGTTSSAGPSTTLSS). S1566 carries the post-translational modification Phosphoserine.

The protein belongs to the synaptojanin family. This sequence in the central section; belongs to the inositol 1,4,5-trisphosphate 5-phosphatase family. Interacts with ASH/GRB2. Interacts with PACSIN1, PACSIN2 and PACSIN3. Interacts with AMPH, SH3GL1, SH3GL2 and SH3GL3. Interacts with MYO1E (via SH3 domain). Interacts with BIN1 and DNM1. Interacts with EPS15. Found in neonatal brain, and in a wide variety of adult non-neuronal tissues. Concentrated at clathrin-coated endocytic intermediates in nerve terminals. Also detected in the lung and heart. Expressed at higher levels than isoform 2 in the testis and liver and is not detected in the skeletal muscle. In terms of tissue distribution, expressed predominantly in the neurons, but is also found in all other tissues at much lower levels. Also detected in the lung and heart. Epressed at lower levels than isoform 1 in the testis and liver and is not detected in the skeletal muscle. As to expression, expressed in the brain.

It localises to the membrane. Its subcellular location is the cytoplasm. The protein localises to the perinuclear region. It catalyses the reaction a 1,2-diacyl-sn-glycero-3-phospho-(1D-myo-inositol-4,5-bisphosphate) + H2O = a 1,2-diacyl-sn-glycero-3-phospho-(1D-myo-inositol 4-phosphate) + phosphate. Phosphatase that acts on various phosphoinositides, including phosphatidylinositol 4-phosphate, phosphatidylinositol (4,5)-bisphosphate and phosphatidylinositol (3,4,5)-trisphosphate. Has a role in clathrin-mediated endocytosis. Hydrolyzes PIP2 bound to actin regulatory proteins resulting in the rearrangement of actin filaments downstream of tyrosine kinase and ASH/GRB2. This is Synaptojanin-1 (Synj1) from Rattus norvegicus (Rat).